A 353-amino-acid polypeptide reads, in one-letter code: UDP-N-acetylglucosamine--N-acetylmuramyl-(pentapeptide) pyrophosphoryl-undecaprenol N-acetylglucosamine transferase (353 aa).

UDP-N-acetyl-alpha-D-glucosamine is bound by residues 15–17 (TGG), asparagine 125, arginine 165, serine 186, and glutamine 286.

Belongs to the glycosyltransferase 28 family. MurG subfamily.

It is found in the cell inner membrane. The enzyme catalyses di-trans,octa-cis-undecaprenyl diphospho-N-acetyl-alpha-D-muramoyl-L-alanyl-D-glutamyl-meso-2,6-diaminopimeloyl-D-alanyl-D-alanine + UDP-N-acetyl-alpha-D-glucosamine = di-trans,octa-cis-undecaprenyl diphospho-[N-acetyl-alpha-D-glucosaminyl-(1-&gt;4)]-N-acetyl-alpha-D-muramoyl-L-alanyl-D-glutamyl-meso-2,6-diaminopimeloyl-D-alanyl-D-alanine + UDP + H(+). Its pathway is cell wall biogenesis; peptidoglycan biosynthesis. Functionally, cell wall formation. Catalyzes the transfer of a GlcNAc subunit on undecaprenyl-pyrophosphoryl-MurNAc-pentapeptide (lipid intermediate I) to form undecaprenyl-pyrophosphoryl-MurNAc-(pentapeptide)GlcNAc (lipid intermediate II). This chain is UDP-N-acetylglucosamine--N-acetylmuramyl-(pentapeptide) pyrophosphoryl-undecaprenol N-acetylglucosamine transferase, found in Chlamydia muridarum (strain MoPn / Nigg).